Consider the following 368-residue polypeptide: Glutamate 5-kinase (368 aa).

Lysine 11 lines the ATP pocket. 3 residues coordinate substrate: serine 51, aspartate 138, and asparagine 150. ATP is bound by residues 170–171 (TD) and 212–218 (TGGMATK). One can recognise a PUA domain in the interval 276–354 (AGEIIVDHGA…QQISQILGYE (79 aa)).

It belongs to the glutamate 5-kinase family.

The protein localises to the cytoplasm. It carries out the reaction L-glutamate + ATP = L-glutamyl 5-phosphate + ADP. It participates in amino-acid biosynthesis; L-proline biosynthesis; L-glutamate 5-semialdehyde from L-glutamate: step 1/2. Its function is as follows. Catalyzes the transfer of a phosphate group to glutamate to form L-glutamate 5-phosphate. The sequence is that of Glutamate 5-kinase from Photorhabdus laumondii subsp. laumondii (strain DSM 15139 / CIP 105565 / TT01) (Photorhabdus luminescens subsp. laumondii).